Here is a 436-residue protein sequence, read N- to C-terminus: MTSIPIFESVSRFLPPANEDVQFWWKVTGRHMACMMHEAGYPEYRQVECLLFHRFKVIPCLGPRPHSDTPWYKSRVGGGAADGCPINYSWRFGTIERKPHIRNFIEPLGALTKTPADPLNEVATKALLQDYSMTLPNVDLEAFWTFAPHYRPRIIEKEDMEKLAGASLLVGAEMSPDSRTIDIKAYMYPRVPSQTSQLLTTILPQAMRDTYGEDVCLDSLNFVHDFMTNDPQGSQLALTGTTGIDCCKLQETRVKIYVITRNTSFDHIAAIMTLGGRRSISGELLGQLKALWYELKGAPAELPSSEQLPVQTKPDGSRNPIVVPFYFDIQPRLALPDVKAYIDVSTSPVSDLAAAKAVVRHLEQHGSGQNPKAYLNVLKDITPVEELETQKGALAFYSVAVKKNELDITSYFNPQVYKRYFAHEVQLNGQRRSVFE.

It belongs to the tryptophan dimethylallyltransferase family.

The protein operates within secondary metabolite biosynthesis. Its function is as follows. Prenyltransferase; part of the gene cluster that mediates the biosynthesis of neosartoricin B, a prenylated anthracenone that probably exhibits T-cell antiproliferative activity, suggestive of a physiological role as an immunosuppressive agent. The non-reducing polyketide synthase nscA probably synthesizes and cyclizes the decaketide backbone. The hydrolase nscB then mediates the product release through hydrolysis followed by spontaneous decarboxylation. The prenyltransferase nscD catalyzes the addition of the dimethylallyl group to the aromatic C5. The FAD-dependent monooxygenase nscC is then responsible for the stereospecific hydroxylation at C2. Neosartoricin B can be converted into two additional compounds neosartoricins C and D. Neosartoricin C is a spirocyclic compound that is cyclized through the attack of C3 hydroxyl on C14, followed by dehydration. On the other hand, neosartoricin D is a further cyclized compound in which attack of C2 on C14 in neosartoricin C results in the formation of the acetal-containing dioxabicyclo-octanone ring. Both of these compounds are novel and possibly represent related metabolites of the gene cluster. The sequence is that of Prenyltransferase nscD from Trichophyton rubrum (strain ATCC MYA-4607 / CBS 118892) (Athlete's foot fungus).